A 264-amino-acid polypeptide reads, in one-letter code: Propanediol uptake facilitator PduF (264 aa).

2 consecutive transmembrane segments (helical) span residues 10-30 (GAEF…LSAL) and 42-62 (ICII…GISG). Residues 66–68 (NPA) carry the NPA 1 motif. Helical transmembrane passes span 84–104 (VLPY…LAYV), 143–163 (VWQA…MIMA), and 179–199 (LLIG…TGFA). An NPA 2 motif is present at residues 201–203 (NPA). The helical transmembrane segment at 228 to 248 (IPYFIVPIVAPVIGACAGAAI) threads the bilayer.

Belongs to the MIP/aquaporin (TC 1.A.8) family.

Its subcellular location is the cell inner membrane. Its function is as follows. Probably facilitates diffusion of 1,2-propanediol (1,2-PD) into the cell. Modeling suggests active transport of 1,2-PD is required at low extracellular concentrations to allow maximal growth and saturation of PduP/PduQ within the bacterial microcompartment (BMC); this protein may be the cellular transporter. In terms of biological role, the 1,2-PD-specific bacterial microcompartment (BMC) concentrates low levels of 1,2-PD catabolic enzymes, concentrates volatile reaction intermediates thus enhancing pathway flux and keeps the level of toxic, mutagenic propionaldehyde low. The sequence is that of Propanediol uptake facilitator PduF from Salmonella typhimurium (strain LT2 / SGSC1412 / ATCC 700720).